A 172-amino-acid chain; its full sequence is Large ribosomal subunit protein uL10 (172 aa).

Belongs to the universal ribosomal protein uL10 family. In terms of assembly, part of the ribosomal stalk of the 50S ribosomal subunit. The N-terminus interacts with L11 and the large rRNA to form the base of the stalk. The C-terminus forms an elongated spine to which L12 dimers bind in a sequential fashion forming a multimeric L10(L12)X complex.

In terms of biological role, forms part of the ribosomal stalk, playing a central role in the interaction of the ribosome with GTP-bound translation factors. The polypeptide is Large ribosomal subunit protein uL10 (Methylobacterium radiotolerans (strain ATCC 27329 / DSM 1819 / JCM 2831 / NBRC 15690 / NCIMB 10815 / 0-1)).